The chain runs to 390 residues: D-alanyl-D-alanine carboxypeptidase DacD (390 aa).

The N-terminal stretch at 1–23 (MLLKRRLFIAASLFAMHLSPALA) is a signal peptide. The active-site Acyl-ester intermediate is the serine 65. The active-site Proton acceptor is the lysine 68. Serine 131 is a catalytic residue. Lysine 234 is a substrate binding site.

It belongs to the peptidase S11 family.

It localises to the cell inner membrane. It carries out the reaction Preferential cleavage: (Ac)2-L-Lys-D-Ala-|-D-Ala. Also transpeptidation of peptidyl-alanyl moieties that are N-acyl substituents of D-alanine.. The protein operates within cell wall biogenesis; peptidoglycan biosynthesis. Its function is as follows. Removes C-terminal D-alanyl residues from sugar-peptide cell wall precursors. This chain is D-alanyl-D-alanine carboxypeptidase DacD (dacD), found in Salmonella typhimurium (strain LT2 / SGSC1412 / ATCC 700720).